Here is a 191-residue protein sequence, read N- to C-terminus: Ankyrin repeat domain-containing protein 22 (191 aa).

4 ANK repeats span residues 39–68, 72–100, 101–130, and 134–163; these read NGDT…DVNL, KERT…MPVL, LIGY…EVNA, and DGYT…DPMI.

In Mus musculus (Mouse), this protein is Ankyrin repeat domain-containing protein 22 (Ankrd22).